Reading from the N-terminus, the 460-residue chain is tRNA(Ile)-lysidine synthase (460 aa).

Residue 30–35 (SGGLDS) participates in ATP binding.

The protein belongs to the tRNA(Ile)-lysidine synthase family.

It localises to the cytoplasm. It carries out the reaction cytidine(34) in tRNA(Ile2) + L-lysine + ATP = lysidine(34) in tRNA(Ile2) + AMP + diphosphate + H(+). Ligates lysine onto the cytidine present at position 34 of the AUA codon-specific tRNA(Ile) that contains the anticodon CAU, in an ATP-dependent manner. Cytidine is converted to lysidine, thus changing the amino acid specificity of the tRNA from methionine to isoleucine. The chain is tRNA(Ile)-lysidine synthase from Yersinia pseudotuberculosis serotype I (strain IP32953).